The chain runs to 338 residues: tRNA N6-adenosine threonylcarbamoyltransferase (338 aa).

Fe cation is bound by residues His-111 and His-115. Substrate-binding positions include 134–138, Asp-167, Gly-180, and Asn-272; that span reads LVSGG. Asp-300 lines the Fe cation pocket.

Belongs to the KAE1 / TsaD family. It depends on Fe(2+) as a cofactor.

It localises to the cytoplasm. The enzyme catalyses L-threonylcarbamoyladenylate + adenosine(37) in tRNA = N(6)-L-threonylcarbamoyladenosine(37) in tRNA + AMP + H(+). Required for the formation of a threonylcarbamoyl group on adenosine at position 37 (t(6)A37) in tRNAs that read codons beginning with adenine. Is involved in the transfer of the threonylcarbamoyl moiety of threonylcarbamoyl-AMP (TC-AMP) to the N6 group of A37, together with TsaE and TsaB. TsaD likely plays a direct catalytic role in this reaction. This is tRNA N6-adenosine threonylcarbamoyltransferase from Shewanella denitrificans (strain OS217 / ATCC BAA-1090 / DSM 15013).